The chain runs to 388 residues: Beta-1,4-galactosyltransferase 5 (388 aa).

Over 1 to 14 the chain is Cytoplasmic; the sequence is MRARRGLLRLPRRS. The helical; Signal-anchor for type II membrane protein transmembrane segment at 15-35 threads the bilayer; that stretch reads LLAALFFFSLSSSLLYFVYVA. The Lumenal segment spans residues 36 to 388; the sequence is PGIVNTYLFM…TPELAQVNEY (353 aa). N-linked (GlcNAc...) asparagine glycosylation is found at Asn77, Asn81, Asn90, Asn111, and Asn128. A disulfide bond links Cys114 and Cys158. Residues 169-173, 208-210, 235-236, Tyr264, and Trp296 each bind UDP-alpha-D-galactose; these read PFRNR, FNR, and VD. Cys229 and Cys248 are oxidised to a cystine. Asp236 contributes to the Mn(2+) binding site. 298–301 lines the N-acetyl-D-glucosamine pocket; that stretch reads GEDD. His329 contributes to the Mn(2+) binding site. 329–330 is a binding site for UDP-alpha-D-galactose; it reads HH. Arg340 contacts N-acetyl-D-glucosamine. Asn364 and Asn373 each carry an N-linked (GlcNAc...) asparagine glycan.

Belongs to the glycosyltransferase 7 family. It depends on Mn(2+) as a cofactor. In terms of tissue distribution, ubiquitously expressed.

The protein localises to the golgi apparatus. It localises to the golgi stack membrane. It catalyses the reaction a beta-D-glucosyl-(1&lt;-&gt;1')-N-acylsphing-4-enine + UDP-alpha-D-galactose = a beta-D-Gal-(1-&gt;4)-beta-D-Glc-(1&lt;-&gt;1)-Cer(d18:1(4E)) + UDP + H(+). The protein operates within protein modification; protein glycosylation. It participates in sphingolipid metabolism. Its function is as follows. Catalyzes the synthesis of lactosylceramide (LacCer) via the transfer of galactose from UDP-galactose to glucosylceramide (GlcCer). LacCer is the starting point in the biosynthesis of all gangliosides (membrane-bound glycosphingolipids) which play pivotal roles in the CNS including neuronal maturation and axonal and myelin formation. Plays a role in the glycosylation of BMPR1A and regulation of its protein stability. Essential for extraembryonic development during early embryogenesis. This is Beta-1,4-galactosyltransferase 5 from Homo sapiens (Human).